Reading from the N-terminus, the 762-residue chain is Polymeric immunoglobulin receptor (762 aa).

The signal sequence occupies residues 1-18 (MTLFFLTCLLAVFPVVSM). Positions 19 to 120 (KSPIFGPPEI…GVGINNRGLS (102 aa)) constitute an Ig-like V-type 1; required for binding to polymeric IgA and IgM domain. Residues 19-636 (KSPIFGPPEI…SSAGQGGSSK (618 aa)) are Extracellular-facing. 2 cysteine pairs are disulfide-bonded: Cys40–Cys110 and Cys56–Cys64. 2 N-linked (GlcNAc...) asparagine glycosylation sites follow: Asn83 and Asn135. Ig-like V-type domains lie at 145-238 (GGKV…DLHV), 251-351 (GSSV…ETTF), 363-460 (GGSV…LKIV), and 464-563 (PNLK…VYVA). Intrachain disulfides connect Cys152–Cys221, Cys258–Cys324, Cys272–Cys280, Cys370–Cys443, Cys384–Cys394, Cys484–Cys546, Cys488–Cys522, and Cys498–Cys505. Residue Asn291 is glycosylated (N-linked (GlcNAc...) asparagine). N-linked (GlcNAc...) asparagine glycosylation is present at Asn423. Asn530 carries an N-linked (GlcNAc...) asparagine glycan. The interval 604–634 (FVDTQAKDPEDAAGGSIASADPGSSAGQGGS) is disordered. Residues 637–659 (VVVSTLVPLALVLALGVLVVGVL) form a helical membrane-spanning segment. Residues 660-762 (RARHRKNVDR…ANIQDGPSKA (103 aa)) lie on the Cytoplasmic side of the membrane.

As to quaternary structure, interacts (mainly via CDR1-like domain) with dimeric IgA. Interacts (mainly via CDR2-like domain) with pentameric IgM. Either free or part of the secretory IgA (sIgA) complex that consists of two, four or five IgA monomers, and two additional non-Ig polypeptides, namely the JCHAIN and the secretory component (the proteolytic product of PIGR). Free secretory component interacts with bacterial antigens toxA of C.difficile and eae of E.coli. N-glycosylated. Carries predominantly biantennary complex type glycans which are largely non-fucosylated. Sialylation with NeuAc is common, except for Asn-291 which carries exclusively high mannose glycans. N-glycans attached to Asn-83: Gal2GlcNAc2Man3GlcNAc2; Gal2GlcNAc2Man3GlcNAc2(Fuc); Gal1GlcNAc1Man4GlcNAc2(Fuc); Gal1GlcNAc1Man3GlcNAc2; Gal1GlcNAc1Man4GlcNAc2 and NeuAc1Gal2GlcNAc2Man3GlcNAc2. N-glycans attached to Asn-135: Gal2GlcNAc2Man3GlcNAc2; Gal1GlcNAc1Man3GlcNAc2 and NeuAc1Gal2GlcNAc2Man3GlcNAc2. N-glycans attached to Asn-291: Man5-8GlcNAc2. N-glycans attached to Asn-423: NeuAc1Gal2GlcNAc2Man3GlcNAc2. N-glycans attached to Asn-530: Gal2GlcNAc2Man3GlcNAc2; Gal1GlcNAc1Man3GlcNAc2 and NeuAc1Gal2GlcNAc2Man3GlcNAc2. N-glycosylation is required for anchoring IgA molecules to mucus but is not necessary for Ig binding.

It localises to the cell membrane. The protein resides in the secreted. Functionally, mediates selective transcytosis of polymeric IgA and IgM across mucosal epithelial cells. Binds polymeric IgA and IgM at the basolateral surface of epithelial cells. The complex is then transported across the cell to be secreted at the apical surface. During this process, a cleavage occurs that separates the extracellular (known as the secretory component) from the transmembrane segment. Through its N-linked glycans ensures anchoring of secretory IgA (sIgA) molecules to mucus lining the epithelial surface to neutralize extracellular pathogens. On its own (free form) may act as a non-specific microbial scavenger to prevent pathogen interaction with epithelial cells. The sequence is that of Polymeric immunoglobulin receptor (PIGR) from Equus asinus (Donkey).